The primary structure comprises 760 residues: U-box domain-containing protein 3 (760 aa).

Residues 146–217 (LMELMENALR…EQTEQLIELV (72 aa)) adopt a coiled-coil conformation. The U-box domain maps to 237–311 (SIPPYFRCPL…ASWLEANRIN (75 aa)). A compositionally biased stretch (polar residues) spans 424–434 (ILGNHQSSSEM). A disordered region spans residues 424–448 (ILGNHQSSSEMSPKKNLESSNNVNH). ARM repeat units lie at residues 504-543 (IENRVHIGRCGAITPLLSLLYSEEKLTQEHAVTALLNLSI), 545-584 (ELNKAMIVEVGAIEPLVHVLNTGNDRAKENSAASLFSLSV), 586-626 (QVNR…NLSI), 628-666 (HDNKARIVQAKAVKYLVELLDPDLEMVDKAVALLANLSA), and 668-707 (GEGRQAIVREGGIPLLVETVDLGSQRGKENAASVLLQLCL).

It catalyses the reaction S-ubiquitinyl-[E2 ubiquitin-conjugating enzyme]-L-cysteine + [acceptor protein]-L-lysine = [E2 ubiquitin-conjugating enzyme]-L-cysteine + N(6)-ubiquitinyl-[acceptor protein]-L-lysine.. It functions in the pathway protein modification; protein ubiquitination. Functions as an E3 ubiquitin ligase. In Arabidopsis thaliana (Mouse-ear cress), this protein is U-box domain-containing protein 3 (PUB3).